Consider the following 105-residue polypeptide: Large ribosomal subunit protein uL24 (105 aa).

It belongs to the universal ribosomal protein uL24 family. Part of the 50S ribosomal subunit.

One of two assembly initiator proteins, it binds directly to the 5'-end of the 23S rRNA, where it nucleates assembly of the 50S subunit. In terms of biological role, one of the proteins that surrounds the polypeptide exit tunnel on the outside of the subunit. In Methylobacillus flagellatus (strain ATCC 51484 / DSM 6875 / VKM B-1610 / KT), this protein is Large ribosomal subunit protein uL24.